The primary structure comprises 131 residues: SPbeta prophage-derived UPF0715 membrane protein YopD (131 aa).

4 helical membrane passes run 12-32, 38-58, 75-95, and 108-128; these read VYTLAFSSLSFGLIFGLYLFV, AIALVTIAIIAFYALITYLVF, LINFLIYIAVAFSAVFLFWFV, and FEYYIMSIVAAFIYWFWDSIF.

This sequence belongs to the UPF0715 family.

It is found in the cell membrane. This Bacillus subtilis (strain 168) protein is SPbeta prophage-derived UPF0715 membrane protein YopD (yopD).